A 51-amino-acid polypeptide reads, in one-letter code: Small ribosomal subunit protein eS31 (51 aa).

Zn(2+) contacts are provided by cysteine 21, cysteine 24, cysteine 39, and cysteine 42. The C4-type zinc-finger motif lies at 21–42 (CVRCSNGVFMADHGDRYACGKC).

The protein belongs to the eukaryotic ribosomal protein eS31 family. As to quaternary structure, part of the 30S ribosomal subunit. Zn(2+) serves as cofactor.

In Methanothermobacter thermautotrophicus (strain ATCC 29096 / DSM 1053 / JCM 10044 / NBRC 100330 / Delta H) (Methanobacterium thermoautotrophicum), this protein is Small ribosomal subunit protein eS31.